The chain runs to 200 residues: Large ribosomal subunit protein uL4 (200 aa).

The interval 38-72 is disordered; it reads GRQGTKQQKTRSDVAGGGKRPWRQKGTGRARAGTT.

It belongs to the universal ribosomal protein uL4 family. As to quaternary structure, part of the 50S ribosomal subunit.

Its function is as follows. One of the primary rRNA binding proteins, this protein initially binds near the 5'-end of the 23S rRNA. It is important during the early stages of 50S assembly. It makes multiple contacts with different domains of the 23S rRNA in the assembled 50S subunit and ribosome. Functionally, forms part of the polypeptide exit tunnel. This is Large ribosomal subunit protein uL4 from Pseudomonas putida (strain ATCC 700007 / DSM 6899 / JCM 31910 / BCRC 17059 / LMG 24140 / F1).